The chain runs to 116 residues: Large ribosomal subunit protein bL20 (116 aa).

It belongs to the bacterial ribosomal protein bL20 family.

Functionally, binds directly to 23S ribosomal RNA and is necessary for the in vitro assembly process of the 50S ribosomal subunit. It is not involved in the protein synthesizing functions of that subunit. The protein is Large ribosomal subunit protein bL20 of Desulfosudis oleivorans (strain DSM 6200 / JCM 39069 / Hxd3) (Desulfococcus oleovorans).